A 344-amino-acid chain; its full sequence is AP2/ERF and B3 domain-containing transcription factor RAV1 (344 aa).

Low complexity predominate over residues 1–15 (MESSSVDESTTSTGS). The disordered stretch occupies residues 1-22 (MESSSVDESTTSTGSICETPAI). A DNA-binding region (AP2/ERF) is located at residues 61 to 116 (KYKGVVPQPNGRWGAQIYEKHQRVWLGTFNEEDEAARAYDVAVHRFRRRDAVTNFK). The tract at residues 148 to 169 (ELEQSKRRRNGNGNMTRTLLTS) is disordered. Residues 188-292 (FEKAVTPSDV…QLYIGWKSRS (105 aa)) constitute a DNA-binding region (TF-B3).

The protein belongs to the AP2/ERF transcription factor family. RAV subfamily. In terms of assembly, monomer. Expressed in all tissues examined: Roots, rosette leaves, cauline leaves, inflorescence stems, flowers and siliques. Highest expression in roots and rosette leaves. Very low expression in flowers.

Its subcellular location is the nucleus. Binds specifically to bipartite recognition sequences composed of two unrelated motifs, 5'-CAACA-3' and 5'-CACCTG-3'. May function as negative regulator of plant growth and development. The sequence is that of AP2/ERF and B3 domain-containing transcription factor RAV1 (RAV1) from Arabidopsis thaliana (Mouse-ear cress).